The chain runs to 366 residues: NADH-quinone oxidoreductase subunit D (366 aa).

It belongs to the complex I 49 kDa subunit family. In terms of assembly, NDH-1 is composed of 14 different subunits. Subunits NuoB, C, D, E, F, and G constitute the peripheral sector of the complex.

It is found in the cell membrane. It carries out the reaction a quinone + NADH + 5 H(+)(in) = a quinol + NAD(+) + 4 H(+)(out). NDH-1 shuttles electrons from NADH, via FMN and iron-sulfur (Fe-S) centers, to quinones in the respiratory chain. The immediate electron acceptor for the enzyme in this species is believed to be a menaquinone. Couples the redox reaction to proton translocation (for every two electrons transferred, four hydrogen ions are translocated across the cytoplasmic membrane), and thus conserves the redox energy in a proton gradient. This Bacillus cereus (strain ZK / E33L) protein is NADH-quinone oxidoreductase subunit D.